A 389-amino-acid chain; its full sequence is 23S rRNA (uracil(747)-C(5))-methyltransferase RlmC (389 aa).

4 residues coordinate [4Fe-4S] cluster: Cys12, Cys20, Cys23, and Cys99. Gln224, Phe253, Glu274, and Asn321 together coordinate S-adenosyl-L-methionine. Catalysis depends on Cys348, which acts as the Nucleophile.

The protein belongs to the class I-like SAM-binding methyltransferase superfamily. RNA M5U methyltransferase family. RlmC subfamily.

It carries out the reaction uridine(747) in 23S rRNA + S-adenosyl-L-methionine = 5-methyluridine(747) in 23S rRNA + S-adenosyl-L-homocysteine + H(+). Functionally, catalyzes the formation of 5-methyl-uridine at position 747 (m5U747) in 23S rRNA. This is 23S rRNA (uracil(747)-C(5))-methyltransferase RlmC from Shewanella sp. (strain W3-18-1).